The sequence spans 49 residues: Lysozyme C (49 aa).

Residues 1–49 (SKMKKCEFAKIAKEQHMDGYHGVSLADWVCLVNNESDFNTKAINRNKGI) form the C-type lysozyme domain. Residue glutamate 35 is part of the active site.

This sequence belongs to the glycosyl hydrolase 22 family. In terms of assembly, monomer.

It localises to the secreted. The enzyme catalyses Hydrolysis of (1-&gt;4)-beta-linkages between N-acetylmuramic acid and N-acetyl-D-glucosamine residues in a peptidoglycan and between N-acetyl-D-glucosamine residues in chitodextrins.. Lysozymes have primarily a bacteriolytic function; those in tissues and body fluids are associated with the monocyte-macrophage system and enhance the activity of immunoagents. This Pseudocheirus peregrinus (Common ring-tailed possum) protein is Lysozyme C (LYZ).